We begin with the raw amino-acid sequence, 288 residues long: MAGAKEIRSKIGSVKSTQKITKAMEMVAASKMRRSQDAMEASRPYAETMRKVIGHVANASLEYRHPYLDEREAKRVGYIIISTDRGLCGGLNINVFKKAVTDMQAWKEKGAEVELAVIGSKATAFFKHGGAKVAAQVSGLGDSPSLEDLIGSVSVMLEKYDEGELDRLYLVFNKFVNTMVQQPTIDQLLPLPKSDSKDMQREHSWDYIYEPEPQALLDALLVRYVESQVYQGVVENLACEQAARMVAMKAATDNATNLIDDLELVYNKARQAAITQELSEIVGGAAAV.

This sequence belongs to the ATPase gamma chain family. F-type ATPases have 2 components, CF(1) - the catalytic core - and CF(0) - the membrane proton channel. CF(1) has five subunits: alpha(3), beta(3), gamma(1), delta(1), epsilon(1). CF(0) has three main subunits: a, b and c.

It localises to the cell inner membrane. Its function is as follows. Produces ATP from ADP in the presence of a proton gradient across the membrane. The gamma chain is believed to be important in regulating ATPase activity and the flow of protons through the CF(0) complex. This chain is ATP synthase gamma chain, found in Vibrio vulnificus (strain CMCP6).